A 366-amino-acid chain; its full sequence is Chorismate synthase (366 aa).

Residues R48 and R54 each contribute to the NADP(+) site. FMN-binding positions include 125–127 (RSS), 238–239 (NA), G278, 293–297 (KPTSS), and R319.

The protein belongs to the chorismate synthase family. As to quaternary structure, homotetramer. Requires FMNH2 as cofactor.

It catalyses the reaction 5-O-(1-carboxyvinyl)-3-phosphoshikimate = chorismate + phosphate. The protein operates within metabolic intermediate biosynthesis; chorismate biosynthesis; chorismate from D-erythrose 4-phosphate and phosphoenolpyruvate: step 7/7. Its function is as follows. Catalyzes the anti-1,4-elimination of the C-3 phosphate and the C-6 proR hydrogen from 5-enolpyruvylshikimate-3-phosphate (EPSP) to yield chorismate, which is the branch point compound that serves as the starting substrate for the three terminal pathways of aromatic amino acid biosynthesis. This reaction introduces a second double bond into the aromatic ring system. In Ralstonia pickettii (strain 12J), this protein is Chorismate synthase.